We begin with the raw amino-acid sequence, 1409 residues long: CRISPR-associated endonuclease Cas9 (1409 aa).

Residue aspartate 31 is the For RuvC-like nuclease domain of the active site. Mg(2+) is bound by residues aspartate 31, glutamate 784, and glutamate 788. The region spanning 792–949 (TNQGKSNSQQ…DKAGFIQRQL (158 aa)) is the HNH Cas9-type domain. The active-site Proton acceptor for HNH nuclease domain is histidine 868. A Mg(2+)-binding site is contributed by histidine 1011. Residues 1121-1130 (EQNHGLDRGK) show a composition bias toward basic and acidic residues. The segment at 1121-1151 (EQNHGLDRGKPKGLFNANLSSKPKPNSNENL) is disordered. The segment covering 1137 to 1150 (ANLSSKPKPNSNEN) has biased composition (polar residues).

This sequence belongs to the CRISPR-associated protein Cas9 family. Subtype II-A subfamily. As to quaternary structure, monomer. Binds crRNA and tracrRNA. It depends on Mg(2+) as a cofactor.

With respect to regulation, only has nuclease activity when bound to both gRNAs (crRNA plus tracrRNA). In terms of biological role, CRISPR (clustered regularly interspaced short palindromic repeat) is an adaptive immune system that provides protection against mobile genetic elements (viruses, transposable elements and conjugative plasmids). CRISPR clusters contain spacers, sequences complementary to antecedent mobile elements, and target invading nucleic acids. CRISPR clusters are transcribed and processed into CRISPR RNA (crRNA). In type II CRISPR systems correct processing of pre-crRNA requires a trans-encoded small RNA (tracrRNA), endogenous ribonuclease 3 (rnc) and Cas9. The tracrRNA serves as a guide for ribonuclease 3-aided processing of pre-crRNA. Cas9/crRNA/tracrRNA endonucleolytically cleaves linear or circular dsDNA target complementary to the spacer yielding blunt ends; Cas9 is inactive in the absence of the 2 guide RNAs (gRNA). Cas9 recognizes a 3'-G-rich protospacer adjacent motif (PAM, TGGTG in this organism) in the CRISPR repeat sequences to help distinguish self versus nonself, as targets within the bacterial CRISPR locus do not have PAMs. PAM recognition is also required for catalytic activity. When the CRISPR3/cas system consisting of cas9-cas1-cas2-csn2-CRISPR3 or just cas9-CRISPR3 is expressed in E.coli it prevents plasmids homologous to spacers 1 or 2 from transforming. The sequence is that of CRISPR-associated endonuclease Cas9 from Streptococcus thermophilus.